The primary structure comprises 338 residues: Glyceraldehyde-3-phosphate dehydrogenase 2 (338 aa).

Residues 11–12 (RI), D33, and R78 contribute to the NAD(+) site. D-glyceraldehyde 3-phosphate contacts are provided by residues 149 to 151 (SCT), T180, 209 to 210 (TG), and R232. The active-site Nucleophile is C150. N314 is a binding site for NAD(+).

It belongs to the glyceraldehyde-3-phosphate dehydrogenase family. Homotetramer.

The protein resides in the cytoplasm. The catalysed reaction is D-glyceraldehyde 3-phosphate + phosphate + NAD(+) = (2R)-3-phospho-glyceroyl phosphate + NADH + H(+). It functions in the pathway carbohydrate degradation; glycolysis; pyruvate from D-glyceraldehyde 3-phosphate: step 1/5. This Agaricus bisporus (White button mushroom) protein is Glyceraldehyde-3-phosphate dehydrogenase 2 (gpd2).